The chain runs to 454 residues: Mitochondrial dynamics protein MID49 (454 aa).

The Mitochondrial intermembrane portion of the chain corresponds to 1–22; the sequence is MAEFSQKQRKQSGSEGLGSVVD. The helical transmembrane segment at 23–43 threads the bilayer; that stretch reads FLLANARLVLGVGGAAVLGIA. Residues 44–454 lie on the Cytoplasmic side of the membrane; sequence TLAVKRLIDR…SGLQVPESLF (411 aa). Residues 76-113 are disordered; it reads ATSPQKPQPPPAAFSQPLATGSPSPSVPVEPTPIHSPT.

The protein belongs to the MID49/MID51 family. In terms of assembly, interacts with DNM1L.

It localises to the mitochondrion outer membrane. Its function is as follows. Mitochondrial outer membrane protein which regulates mitochondrial organization. It is required for mitochondrial fission and promotes the recruitment and association of the fission mediator dynamin-related protein 1 (DNM1L) to the mitochondrial surface independently of the mitochondrial fission FIS1 and MFF proteins. Regulates DNM1L GTPase activity. The sequence is that of Mitochondrial dynamics protein MID49 (Mief2) from Mus musculus (Mouse).